Here is a 170-residue protein sequence, read N- to C-terminus: Adenine phosphoribosyltransferase (170 aa).

Belongs to the purine/pyrimidine phosphoribosyltransferase family. In terms of assembly, homodimer.

The protein localises to the cytoplasm. It carries out the reaction AMP + diphosphate = 5-phospho-alpha-D-ribose 1-diphosphate + adenine. The protein operates within purine metabolism; AMP biosynthesis via salvage pathway; AMP from adenine: step 1/1. Catalyzes a salvage reaction resulting in the formation of AMP, that is energically less costly than de novo synthesis. The sequence is that of Adenine phosphoribosyltransferase from Maridesulfovibrio salexigens (strain ATCC 14822 / DSM 2638 / NCIMB 8403 / VKM B-1763) (Desulfovibrio salexigens).